The primary structure comprises 189 residues: Thermostable direct hemolysin 1 (189 aa).

Residues 1 to 24 (MKHQYFAKKSFLFISMLAAFKTSA) form the signal peptide. The cysteines at positions 175 and 185 are disulfide-linked.

Belongs to the TDH hemolysin family. In terms of assembly, homodimer.

Functionally, bacterial hemolysins are exotoxins that attack blood cell membranes and cause cell rupture by mechanisms not clearly defined. The chain is Thermostable direct hemolysin 1 (tdh1) from Vibrio parahaemolyticus serotype O3:K6 (strain RIMD 2210633).